Consider the following 182-residue polypeptide: Isopentenyl-diphosphate Delta-isomerase (182 aa).

Mn(2+)-binding residues include His25 and His32. In terms of domain architecture, Nudix hydrolase spans 30–164 (LLHLAFSSWL…PWAFSPWMVM (135 aa)). Residue Cys67 is part of the active site. Residue His69 participates in Mn(2+) binding. Glu87 is a binding site for Mg(2+). Glu114 and Glu116 together coordinate Mn(2+). Glu116 is a catalytic residue.

The protein belongs to the IPP isomerase type 1 family. In terms of assembly, homodimer. Mg(2+) is required as a cofactor. It depends on Mn(2+) as a cofactor.

It is found in the cytoplasm. The enzyme catalyses isopentenyl diphosphate = dimethylallyl diphosphate. Its pathway is isoprenoid biosynthesis; dimethylallyl diphosphate biosynthesis; dimethylallyl diphosphate from isopentenyl diphosphate: step 1/1. Its function is as follows. Catalyzes the 1,3-allylic rearrangement of the homoallylic substrate isopentenyl (IPP) to its highly electrophilic allylic isomer, dimethylallyl diphosphate (DMAPP). This Escherichia coli O9:H4 (strain HS) protein is Isopentenyl-diphosphate Delta-isomerase.